Here is a 163-residue protein sequence, read N- to C-terminus: Thiol peroxidase (163 aa).

Residues 16-162 enclose the Thioredoxin domain; sequence LQVGDTAHDF…YDAAIAAVKN (147 aa). Residue C58 is the Cysteine sulfenic acid (-SOH) intermediate of the active site. An intrachain disulfide couples C58 to C92.

This sequence belongs to the peroxiredoxin family. Tpx subfamily. In terms of assembly, homodimer.

The enzyme catalyses a hydroperoxide + [thioredoxin]-dithiol = an alcohol + [thioredoxin]-disulfide + H2O. Its function is as follows. Thiol-specific peroxidase that catalyzes the reduction of hydrogen peroxide and organic hydroperoxides to water and alcohols, respectively. Plays a role in cell protection against oxidative stress by detoxifying peroxides. The protein is Thiol peroxidase of Streptococcus gordonii.